We begin with the raw amino-acid sequence, 71 residues long: MGKFKMRSKDLRGMSVEELEKTLRELRIKLMGLRYKAKVGLLENPGELREARRNVARILTVLREKREGEKA.

It belongs to the universal ribosomal protein uL29 family.

The protein is Large ribosomal subunit protein uL29 (rpl29) of Aeropyrum pernix (strain ATCC 700893 / DSM 11879 / JCM 9820 / NBRC 100138 / K1).